Here is a 158-residue protein sequence, read N- to C-terminus: Probable flavodoxin 1 (158 aa).

The Flavodoxin-like domain occupies 4–144 (ALITYASMSG…SCRAFARGFL (141 aa)).

The protein belongs to the flavodoxin family. It depends on FMN as a cofactor.

Functionally, low-potential electron donor to a number of redox enzymes. In Bacillus subtilis (strain 168), this protein is Probable flavodoxin 1 (ykuN).